A 51-amino-acid chain; its full sequence is ADEMRNVSDEEAKEFHAMFSQAFTVYVGVAVVAHILAWAWRPWIPGDEGFG.

The Cytoplasmic segment spans residues 1 to 17 (ADEMRNVSDEEAKEFHA). A bacteriochlorophyll-binding residues include His-16 and His-34. The chain crosses the membrane as a helical span at residues 18 to 40 (MFSQAFTVYVGVAVVAHILAWAW). The Periplasmic portion of the chain corresponds to 41–51 (RPWIPGDEGFG).

The protein belongs to the antenna complex beta subunit family. The core complex is formed by different alpha and beta chains, binding bacteriochlorophyll molecules, and arranged most probably in tetrameric structures disposed around the reaction center. The non-pigmented gamma chains may constitute additional components.

The protein localises to the cell inner membrane. Its function is as follows. Antenna complexes are light-harvesting systems, which transfer the excitation energy to the reaction centers. This is Light-harvesting protein B800/850/890 beta-2 chain from Halorhodospira halophila (strain DSM 244 / SL1) (Ectothiorhodospira halophila (strain DSM 244 / SL1)).